Reading from the N-terminus, the 1081-residue chain is MSWLRSSPLRQSGNGGGGGVSTGHSSTGSLRQRPIDAATDCDPRACYDSFCKHWQQAYDIIQHYAPPTHDDVLGVVSHLDYMVTLLLVELHHCNKVSLPSTDASAAPAAPCLEYLLSENLLDKLYEWACTTGRYANAVRLEQLKLYELLVSHSRHQLLCHEPFLRPLLKILASSQGEIFPPDLEKRLVILLNQLCVVLMQNVHLLDLFFFSAQTQVQEQIQNGNVPPPKSGTTTNFIIFSLLIPYVHREGSLGHQARDALLLCMALSQKNSNIGTYIAQYSSICPLLVTGLGGLYSRLPNSIEISSIDWHRITPDDVTEIPELTLFMNALEFCNAVVQVAHEMIKQQLLDFMYQGFIVPVLGPAVLQTLKGKHFQTNIDSQISAMSYLDLILRSITEPGLLRAFVKFLLDTEKFDGERILDSLVERLNSPDANLCMVTMALFDTLLGLHCEDLMLELLLKFMLPGKHVPISHRHKINKIDPYLNSSDFFLELSPDVLKRARDLARPKSVHEQQAPSGATGEQPIQPLAWPSLPSPVMSKTIGANWNYYGLHTGDSLYANLQAYLFEAHWRIAQCQRDCLKWANSYRYQKWPRHGQARVHAHALELARQFFSEFGGGPPAIASESAGEKQLDSLQSIGESSGYESFKWRPADEESDATDLTVTTTTASEADLEHNSSSVSSGMGGGGGAAAGRRGEVWRISHTNRNELLLTDLDFSEDLFAQGTVSLGPFLNAIWGKLQTFTSNSLYVNLHLTGLITRLAWYPLPLIHSLLLRSDIAITSDTPSFHQVLRILKQQIDAELPVTEDSLEIIDVARSSLIDREFRLVNARKGNENSPLHHHQQPQTTLSQQQQQQQGQQRSAYATLSAATPVQATQTSAYDPFKRSDNKRKSISKSISSMFSRRSTPNPPSSAASSGLSQIYAFFTGAASTLVGNNNNNSGSGGQSQPFSSTGTGTCETSLSTNPQSGAAAARSTGTATTANGNSSNSNISIGGSTQTLSGHSNTTTYSSSTLHGLDGGPQTGSFNSEPASLDSVASMGIIASTSGTERTRDVALCAVLLDEWLKELAAIAQEQSVVLVTDQLL.

Residues 1–11 are compositionally biased toward polar residues; it reads MSWLRSSPLRQ. Disordered stretches follow at residues 1–31, 504–524, 650–685, 830–913, and 933–1027; these read MSWL…GSLR, ARPK…EQPI, ADEE…MGGG, NENS…AASS, and NNNN…SEPA. A Phosphoserine modification is found at Ser508. Residues 657 to 668 show a composition bias toward low complexity; the sequence is TDLTVTTTTASE. Ser833 bears the Phosphoserine mark. Residues 840–856 are compositionally biased toward low complexity; the sequence is QPQTTLSQQQQQQQGQQ. Residues 857 to 876 are compositionally biased toward polar residues; it reads RSAYATLSAATPVQATQTSA. 2 stretches are compositionally biased toward low complexity: residues 891-913 and 933-953; these read SKSI…AASS and NNNN…GTGT. Residues 954–963 are compositionally biased toward polar residues; sequence CETSLSTNPQ. Low complexity predominate over residues 964–993; that stretch reads SGAAAARSTGTATTANGNSSNSNISIGGST. Positions 994–1010 are enriched in polar residues; the sequence is QTLSGHSNTTTYSSSTL.

It belongs to the FHIP family.

The sequence is that of FHIP family protein GA25918 from Drosophila pseudoobscura pseudoobscura (Fruit fly).